We begin with the raw amino-acid sequence, 350 residues long: tRNA uridine(34) hydroxylase (350 aa).

The Rhodanese domain occupies 146 to 240; it reads DDPDAVFIDM…YARRAREQGL (95 aa). Cys200 acts as the Cysteine persulfide intermediate in catalysis. Residues 319–328 are compositionally biased toward basic and acidic residues; sequence RRRRAGRENG. Residues 319–350 are disordered; it reads RRRRAGRENGNKIFNKSRGRLNSKLSIPDPAE.

The protein belongs to the TrhO family.

The enzyme catalyses uridine(34) in tRNA + AH2 + O2 = 5-hydroxyuridine(34) in tRNA + A + H2O. In terms of biological role, catalyzes oxygen-dependent 5-hydroxyuridine (ho5U) modification at position 34 in tRNAs. This Salmonella heidelberg (strain SL476) protein is tRNA uridine(34) hydroxylase.